We begin with the raw amino-acid sequence, 1252 residues long: ATP-dependent helicase/nuclease subunit A (1252 aa).

The 484-residue stretch at 6-489 (TNWTEEQKEA…VLLYKNFRSR (484 aa)) folds into the UvrD-like helicase ATP-binding domain. Residue 27 to 34 (AAAGSGKT) coordinates ATP. The region spanning 523–811 (ANYEEIEENL…RIMSIHKSKG (289 aa)) is the UvrD-like helicase C-terminal domain.

It belongs to the helicase family. AddA subfamily. Heterodimer of AddA and AddB/RexB. Mg(2+) serves as cofactor.

The enzyme catalyses Couples ATP hydrolysis with the unwinding of duplex DNA by translocating in the 3'-5' direction.. It catalyses the reaction ATP + H2O = ADP + phosphate + H(+). Functionally, the heterodimer acts as both an ATP-dependent DNA helicase and an ATP-dependent, dual-direction single-stranded exonuclease. Recognizes the chi site generating a DNA molecule suitable for the initiation of homologous recombination. The AddA nuclease domain is required for chi fragment generation; this subunit has the helicase and 3' -&gt; 5' nuclease activities. This Clostridium acetobutylicum (strain ATCC 824 / DSM 792 / JCM 1419 / IAM 19013 / LMG 5710 / NBRC 13948 / NRRL B-527 / VKM B-1787 / 2291 / W) protein is ATP-dependent helicase/nuclease subunit A.